A 187-amino-acid chain; its full sequence is Protein GrpE (187 aa).

The segment at 1-26 is disordered; the sequence is MNDLKNAENGPDEADTPQGAPSQEPD.

The protein belongs to the GrpE family. As to quaternary structure, homodimer.

It is found in the cytoplasm. Its function is as follows. Participates actively in the response to hyperosmotic and heat shock by preventing the aggregation of stress-denatured proteins, in association with DnaK and GrpE. It is the nucleotide exchange factor for DnaK and may function as a thermosensor. Unfolded proteins bind initially to DnaJ; upon interaction with the DnaJ-bound protein, DnaK hydrolyzes its bound ATP, resulting in the formation of a stable complex. GrpE releases ADP from DnaK; ATP binding to DnaK triggers the release of the substrate protein, thus completing the reaction cycle. Several rounds of ATP-dependent interactions between DnaJ, DnaK and GrpE are required for fully efficient folding. The sequence is that of Protein GrpE from Methylocella silvestris (strain DSM 15510 / CIP 108128 / LMG 27833 / NCIMB 13906 / BL2).